The sequence spans 402 residues: Speedy protein E6 (402 aa).

Residues 1–89 (MDRTETRFRK…EEPEKELAPE (89 aa)) are disordered. Over residues 16-39 (GKITTSRQPHPQNEQSPQRSTSGY) the composition is skewed to polar residues. The segment covering 76–89 (DESEEEPEKELAPE) has biased composition (acidic residues).

The protein belongs to the Speedy/Ringo family.

The chain is Speedy protein E6 (SPDYE6) from Homo sapiens (Human).